The sequence spans 620 residues: Sodium-dependent dopamine transporter (620 aa).

Residues 1-56 (MSKSKCSVGLMSSVVAPAKEPNAMGPKEVELILVKEQNGVQLTSSTLTNPRQSPVE) are Cytoplasmic-facing. A discontinuously helical transmembrane segment spans residues 57-95 (AQDRETWGKKIDFLLSVIGFAVDLANVWRFPYLCYKNGG). The Na(+) site is built by Gly-75, Ala-77, Val-78, Asp-79, and Asn-82. Asp-79 is a dopamine binding site. The next 2 helical transmembrane spans lie at 96 to 127 (GAFL…NREG) and 128 to 171 (AAGV…FSSF). Dopamine-binding residues include Ser-149 and Gly-153. Over 172–236 (TTELPWIHCN…SHGIDDLGPP (65 aa)) the chain is Extracellular. A disulfide bond links Cys-180 and Cys-189. N-linked (GlcNAc...) asparagine glycans are attached at residues Asn-181, Asn-188, and Asn-205. 2 helical membrane passes run 237 to 256 (RWQL…FSLW) and 257 to 287 (KGVK…GVTL). Residues 288–306 (PGAIDGIRAYLSVDFYRLC) lie on the Extracellular side of the membrane. A discontinuously helical membrane pass occupies residues 307–335 (EASVWIDAATQVCFSLGVGFGVLIAFSSY). Gln-317 contributes to the chloride binding site. Position 320 (Phe-320) interacts with dopamine. Positions 321 and 353 each coordinate Na(+). A chloride-binding site is contributed by Ser-321. A helical transmembrane segment spans residues 336 to 376 (NKFTNNCYRDAIVTTSINSLTSFSSGFVVFSFLGYMAQKHS). Residue Ser-357 coordinates chloride. Residues 377-400 (VPIGDVAKDGPGLIFIIYPEAIAT) are Extracellular-facing. The next 3 helical transmembrane spans lie at 401 to 442 (LPLS…QLLH), 443 to 466 (RHRE…CVTN), and 467 to 499 (GGIY…AWFY). The Na(+) site is built by Leu-418, Asp-421, and Ser-422. Ser-422 and Ala-423 together coordinate dopamine. The Cytoplasmic segment spans residues 500 to 516 (GVGQFSDDIQQMTGQRP). A helical membrane pass occupies residues 517 to 542 (SLYWRLCWKLVSPCFLLFVVVVSIVT). Topologically, residues 543 to 553 (FRPPHYGAYIF) are extracellular. A helical membrane pass occupies residues 554–583 (PDWANALGWVIATSSMAMVPIYAAYKFCSL). The interval 561–590 (GWVIATSSMAMVPIYAAYKFCSLPGSFREK) is interaction with TGFB1I1. The Cytoplasmic portion of the chain corresponds to 584-620 (PGSFREKLAYAIAPEKDRELVDRGEVRQFTLRHWLKV).

It belongs to the sodium:neurotransmitter symporter (SNF) (TC 2.A.22) family. SLC6A3 subfamily. As to quaternary structure, monomer. Homooligomer; disulfide-linked. Interacts with PRKCABP and TGFB1I1. Interacts (via N-terminus) with SYNGR3 (via N-terminus). Interacts with SLC18A2. Interacts with TOR1A (ATP-bound); TOR1A regulates SLC6A3 subcellular location. Interacts with alpha-synuclein/SNCA. Interacts with SEPTIN4.

The protein resides in the cell membrane. It is found in the cell projection. Its subcellular location is the neuron projection. The protein localises to the axon. It catalyses the reaction dopamine(out) + chloride(out) + Na(+)(out) = dopamine(in) + chloride(in) + Na(+)(in). The catalysed reaction is (R)-noradrenaline(out) + chloride(out) + Na(+)(out) = (R)-noradrenaline(in) + chloride(in) + Na(+)(in). The enzyme catalyses dopamine(out) + chloride(out) + 2 Na(+)(out) = dopamine(in) + chloride(in) + 2 Na(+)(in). With respect to regulation, inhibited by zinc ions. Functionally, mediates sodium- and chloride-dependent transport of dopamine. Also mediates sodium- and chloride-dependent transport of norepinephrine (also known as noradrenaline). Regulator of light-dependent retinal hyaloid vessel regression, downstream of OPN5 signaling. The polypeptide is Sodium-dependent dopamine transporter (SLC6A3) (Macaca fascicularis (Crab-eating macaque)).